We begin with the raw amino-acid sequence, 412 residues long: 3,4-dihydroxybenzoate--[aryl-carrier protein] ligase (412 aa).

The protein belongs to the ATP-dependent AMP-binding enzyme family.

It carries out the reaction holo-[aryl-carrier protein] + 3,4-dihydroxybenzoate + ATP = 3,4-dihydroxybenzoyl-[aryl-carrier protein] + AMP + diphosphate. The catalysed reaction is 3,4-dihydroxybenzoate + ATP + H(+) = 3,4-dihydroxybenzoyl-5'-AMP + diphosphate. The enzyme catalyses 3,4-dihydroxybenzoyl-5'-AMP + holo-[aryl-carrier protein] = 3,4-dihydroxybenzoyl-[aryl-carrier protein] + AMP + H(+). The protein operates within siderophore biosynthesis; petrobactin biosynthesis. Its activity is regulated as follows. ATP-pyrophosphate exchange is inhibited in vitro by nonhydrolyzable acylsulfamate analogs that mimic the AsbC-bound intermediate 3,4-dihydroxybenzoyl-AMP. Its function is as follows. Involved in the biosynthesis of petrobactin, a catecholate siderophore that functions in both iron acquisition and virulence. Catalyzes the adenylation of 3,4-dihydroxybenzoate (3,4-DHBA) to the corresponding AMP ester, followed by the transfer of the activated unit to the phosphopantetheine thiol of the aryl-carrier protein AsbD. The sequence is that of 3,4-dihydroxybenzoate--[aryl-carrier protein] ligase from Bacillus anthracis.